Reading from the N-terminus, the 399-residue chain is Probable sugar efflux transporter (399 aa).

The next 12 membrane-spanning stretches (helical) occupy residues 15 to 35 (VVTLAIAAFIFNTTEFAPVGL), 50 to 70 (VGMMLTIYAWVVALMSLPFML), 81 to 101 (LIGLFILFIASHVLSFFAWNF), 103 to 123 (VLVISRIGIAFAHAVFWSITS), 136 to 156 (AQALSLIATGTALAMVFGIPI), 168 to 188 (MTFLAIGLGALATLACLVKLL), 209 to 229 (PALVSVYILTVVVVTAHYTAY), 246 to 266 (FATVLLLILGGAGIIGSILFG), 273 to 293 (ASGLISLAIALLLACLLLLLP), 301 to 321 (LMLLSIFWGVAIMIIGLGMQV), 333 to 353 (VAMSLFSGIFNIGIGAGALVG), and 364 to 384 (SVGYVGAIPALVALVWSLMIF).

Belongs to the major facilitator superfamily. SotB (TC 2.A.1.2) family.

The protein resides in the cell inner membrane. In terms of biological role, involved in the efflux of sugars. The physiological role may be the reduction of the intracellular concentration of toxic sugars or sugar metabolites. The chain is Probable sugar efflux transporter from Klebsiella pneumoniae subsp. pneumoniae (strain ATCC 700721 / MGH 78578).